The primary structure comprises 552 residues: Formate--tetrahydrofolate ligase (552 aa).

Thr-63–Thr-70 provides a ligand contact to ATP.

Belongs to the formate--tetrahydrofolate ligase family.

The catalysed reaction is (6S)-5,6,7,8-tetrahydrofolate + formate + ATP = (6R)-10-formyltetrahydrofolate + ADP + phosphate. It functions in the pathway one-carbon metabolism; tetrahydrofolate interconversion. The sequence is that of Formate--tetrahydrofolate ligase from Caldicellulosiruptor bescii (strain ATCC BAA-1888 / DSM 6725 / KCTC 15123 / Z-1320) (Anaerocellum thermophilum).